We begin with the raw amino-acid sequence, 556 residues long: Endonuclease/exonuclease/phosphatase family domain-containing protein 1 (556 aa).

Residues 39-68 (ERLNINTATEEELMTLPGVTRQVAQNIVEY) form the HhH domain.

This is Endonuclease/exonuclease/phosphatase family domain-containing protein 1 (eepd1) from Xenopus laevis (African clawed frog).